Here is a 502-residue protein sequence, read N- to C-terminus: Zinc finger protein 3 homolog (502 aa).

Basic and acidic residues-rich tracts occupy residues 1–13 (MGTE…PKEE) and 80–93 (PSSE…ESER). Disordered regions lie at residues 1 to 26 (MGTE…SLLE) and 47 to 103 (LEGH…NLVT). Residues K6 and K11 each participate in a glycyl lysine isopeptide (Lys-Gly) (interchain with G-Cter in SUMO2) cross-link. 13 consecutive C2H2-type zinc fingers follow at residues 141–163 (HTCK…MRVH), 169–191 (FECK…LRIH), 197–219 (FACN…HRIH), 225–247 (YKCE…QRIH), 253–275 (YECN…QRIH), 281–303 (HECN…QKIH), 309–331 (YLCN…QRIH), 337–359 (YECN…IRIH), 365–387 (YVCK…ERIH), 393–415 (YECF…QRIH), 421–443 (HQCN…QKIH), 449–471 (YECS…QRIH), and 477–499 (YECQ…QSVH).

The protein belongs to the krueppel C2H2-type zinc-finger protein family.

It is found in the nucleus. Functionally, may be involved in transcriptional regulation. This chain is Zinc finger protein 3 homolog (ZFP3), found in Homo sapiens (Human).